Reading from the N-terminus, the 430-residue chain is Adenylosuccinate synthetase (430 aa).

GTP contacts are provided by residues 13-19 and 41-43; these read GDEGKGK and GHT. The active-site Proton acceptor is the Asp-14. The Mg(2+) site is built by Asp-14 and Gly-41. IMP contacts are provided by residues 14–17, 39–42, Thr-130, Arg-144, Gln-225, Thr-240, and Arg-304; these read DEGK and NAGH. His-42 acts as the Proton donor in catalysis. 300–306 lines the substrate pocket; sequence STTGRKR. GTP contacts are provided by residues Arg-306, 332–334, and 414–416; these read KLD and STG.

It belongs to the adenylosuccinate synthetase family. In terms of assembly, homodimer. The cofactor is Mg(2+).

It is found in the cytoplasm. The catalysed reaction is IMP + L-aspartate + GTP = N(6)-(1,2-dicarboxyethyl)-AMP + GDP + phosphate + 2 H(+). The protein operates within purine metabolism; AMP biosynthesis via de novo pathway; AMP from IMP: step 1/2. Its function is as follows. Plays an important role in the de novo pathway of purine nucleotide biosynthesis. Catalyzes the first committed step in the biosynthesis of AMP from IMP. This is Adenylosuccinate synthetase from Buchnera aphidicola subsp. Schizaphis graminum (strain Sg).